A 182-amino-acid chain; its full sequence is Ribosome-recycling factor (182 aa).

The interval 136-160 (VKKSEKDGDLSEDQSRDEQETIQKE) is disordered.

It belongs to the RRF family.

Its subcellular location is the cytoplasm. Responsible for the release of ribosomes from messenger RNA at the termination of protein biosynthesis. May increase the efficiency of translation by recycling ribosomes from one round of translation to another. The chain is Ribosome-recycling factor from Prochlorococcus marinus (strain NATL2A).